The following is a 294-amino-acid chain: 4-hydroxy-tetrahydrodipicolinate synthase (294 aa).

Thr-47 lines the pyruvate pocket. Tyr-135 functions as the Proton donor/acceptor in the catalytic mechanism. Lys-163 functions as the Schiff-base intermediate with substrate in the catalytic mechanism. Residue Ile-206 participates in pyruvate binding.

Belongs to the DapA family. In terms of assembly, homodimer.

The protein resides in the cytoplasm. It catalyses the reaction L-aspartate 4-semialdehyde + pyruvate = (2S,4S)-4-hydroxy-2,3,4,5-tetrahydrodipicolinate + H2O + H(+). It participates in amino-acid biosynthesis; L-lysine biosynthesis via DAP pathway; (S)-tetrahydrodipicolinate from L-aspartate: step 3/4. Catalyzes the condensation of (S)-aspartate-beta-semialdehyde [(S)-ASA] and pyruvate to 4-hydroxy-tetrahydrodipicolinate (HTPA). This is 4-hydroxy-tetrahydrodipicolinate synthase from Staphylococcus epidermidis (strain ATCC 35984 / DSM 28319 / BCRC 17069 / CCUG 31568 / BM 3577 / RP62A).